The primary structure comprises 777 residues: Serine/threonine-protein kinase PTK2 (777 aa).

The segment at Asn-21–Asn-174 is disordered. The span at Thr-30–Lys-41 shows a compositional bias: low complexity. Composition is skewed to polar residues over residues Ala-50–Pro-61 and Arg-83–Met-133. Over residues Ser-149–Ser-172 the composition is skewed to low complexity. One can recognise a Protein kinase domain in the interval Asp-222–Phe-529. ATP contacts are provided by residues Ile-228–Val-236 and Lys-252. Asp-355 functions as the Proton acceptor in the catalytic mechanism. 2 disordered regions span residues Asp-564 to Glu-705 and Ser-728 to Val-764. 2 stretches are compositionally biased toward polar residues: residues Thr-575–His-592 and Thr-648–Phe-672. A compositionally biased stretch (low complexity) spans Asn-677–Asp-694. Polar residues predominate over residues Asn-744–Thr-756.

Belongs to the protein kinase superfamily. Ser/Thr protein kinase family.

It catalyses the reaction L-seryl-[protein] + ATP = O-phospho-L-seryl-[protein] + ADP + H(+). The catalysed reaction is L-threonyl-[protein] + ATP = O-phospho-L-threonyl-[protein] + ADP + H(+). This Candida glabrata (strain ATCC 2001 / BCRC 20586 / JCM 3761 / NBRC 0622 / NRRL Y-65 / CBS 138) (Yeast) protein is Serine/threonine-protein kinase PTK2 (PTK2).